A 427-amino-acid chain; its full sequence is Protein phosphatase methylesterase 1 (427 aa).

Residues 1 to 49 (MSELQKSFAKAKLAKLPPEAPPFSMHPPRDEDDSESASSTGTVVPSPSR) form a disordered region. The segment covering 36-49 (SASSTGTVVPSPSR) has biased composition (polar residues). Active-site residues include Ser207, Asp233, and His364. Residues 402-427 (SAAMKQGAEAGAVPPFGRGQGSSHKP) form a disordered region.

It belongs to the AB hydrolase superfamily.

It carries out the reaction [phosphatase 2A protein]-C-terminal L-leucine methyl ester + H2O = [phosphatase 2A protein]-C-terminal L-leucine + methanol + H(+). Its function is as follows. Demethylates proteins that have been reversibly carboxymethylated. Demethylates the phosphatase PP2A catalytic subunit. In Aspergillus oryzae (strain ATCC 42149 / RIB 40) (Yellow koji mold), this protein is Protein phosphatase methylesterase 1 (ppe1).